A 201-amino-acid polypeptide reads, in one-letter code: Large ribosomal subunit protein bL25 (201 aa).

This sequence belongs to the bacterial ribosomal protein bL25 family. CTC subfamily. Part of the 50S ribosomal subunit; part of the 5S rRNA/L5/L18/L25 subcomplex. Contacts the 5S rRNA. Binds to the 5S rRNA independently of L5 and L18.

Functionally, this is one of the proteins that binds to the 5S RNA in the ribosome where it forms part of the central protuberance. The sequence is that of Large ribosomal subunit protein bL25 from Ectopseudomonas mendocina (strain ymp) (Pseudomonas mendocina).